A 194-amino-acid polypeptide reads, in one-letter code: Glycerol-3-phosphate acyltransferase (194 aa).

Transmembrane regions (helical) follow at residues 3–23 (IALL…LIVG), 47–67 (VLGK…GVLP), 78–97 (IHGI…PIYL), 112–132 (ILGV…TLLF), and 153–173 (LFFD…LIII).

Belongs to the PlsY family. As to quaternary structure, probably interacts with PlsX.

It localises to the cell membrane. The enzyme catalyses an acyl phosphate + sn-glycerol 3-phosphate = a 1-acyl-sn-glycero-3-phosphate + phosphate. It participates in lipid metabolism; phospholipid metabolism. Its function is as follows. Catalyzes the transfer of an acyl group from acyl-phosphate (acyl-PO(4)) to glycerol-3-phosphate (G3P) to form lysophosphatidic acid (LPA). This enzyme utilizes acyl-phosphate as fatty acyl donor, but not acyl-CoA or acyl-ACP. The sequence is that of Glycerol-3-phosphate acyltransferase from Macrococcus caseolyticus (strain JCSC5402) (Macrococcoides caseolyticum).